We begin with the raw amino-acid sequence, 492 residues long: Homoserine O-acetyltransferase (492 aa).

Residues 47–352 enclose the AB hydrolase-1 domain; the sequence is NAILVFHALS…KSIYGHDAFL (306 aa). Ser152 functions as the Nucleophile in the catalytic mechanism. A substrate-binding site is contributed by Arg221. Residues Asp315 and His348 contribute to the active site. Residue Asp349 coordinates substrate. CBS domains lie at 375-431 and 440-492; these read MTKN…ENSI and MTKN…TITI.

The protein belongs to the AB hydrolase superfamily. MetX family. In terms of assembly, homodimer.

The protein resides in the cytoplasm. It carries out the reaction L-homoserine + acetyl-CoA = O-acetyl-L-homoserine + CoA. It participates in amino-acid biosynthesis; L-methionine biosynthesis via de novo pathway; O-acetyl-L-homoserine from L-homoserine: step 1/1. Transfers an acetyl group from acetyl-CoA to L-homoserine, forming acetyl-L-homoserine. The protein is Homoserine O-acetyltransferase of Methanococcus vannielii (strain ATCC 35089 / DSM 1224 / JCM 13029 / OCM 148 / SB).